The chain runs to 265 residues: Large ribosomal subunit protein bL9m (265 aa).

Residues 1–49 constitute a mitochondrion transit peptide; that stretch reads MAASVAPGVRTLWWAGAAWLRQGGIRELFRPRIEGSTPGRDFSLSHYQS.

The protein belongs to the bacterial ribosomal protein bL9 family. Component of the mitochondrial ribosome large subunit (39S) which comprises a 16S rRNA and about 50 distinct proteins.

It localises to the mitochondrion. This chain is Large ribosomal subunit protein bL9m (Mrpl9), found in Mus musculus (Mouse).